We begin with the raw amino-acid sequence, 603 residues long: ATP-dependent zinc metalloprotease FtsH (603 aa).

Residues 1-2 (MK) lie on the Stromal side of the membrane. Residues 3–23 (NLWIWSLPLIVLAFIGWQELA) traverse the membrane as a helical segment. At 24-101 (NQMPVATSRM…DVDVHAVSNW (78 aa)) the chain is on the lumenal side. Residues 102–122 (INVASNWIIPLIIIGVVIWLL) form a helical membrane-spanning segment. Over 123–603 (SRSASSNTTG…SQAARLTAVN (481 aa)) the chain is Stromal. 194–201 (GPPGTGKT) is an ATP binding site. Position 415 (His-415) interacts with Zn(2+). Glu-416 is a catalytic residue. Zn(2+) contacts are provided by His-419 and Asp-493.

This sequence in the central section; belongs to the AAA ATPase family. In the C-terminal section; belongs to the peptidase M41 family. Homohexamer. It depends on Zn(2+) as a cofactor.

It is found in the plastid. It localises to the chloroplast thylakoid membrane. Acts as a processive, ATP-dependent zinc metallopeptidase. This is ATP-dependent zinc metalloprotease FtsH from Cyanidioschyzon merolae (strain NIES-3377 / 10D) (Unicellular red alga).